A 671-amino-acid chain; its full sequence is Putative protein kinase C delta type homolog (671 aa).

A disordered region spans residues 1–136 (MMFTRAQVRK…ITNRRGAIKH (136 aa)). Over residues 14 to 27 (SNSSSQRPRSSGGS) the composition is skewed to low complexity. Over residues 57–101 (ARRDQYRDRDHYGKHSFELPRQHSKEEAYHRDRESSAGGVDRGER) the composition is skewed to basic and acidic residues. Residues 102–116 (SGIGGNGGGVTGGGV) are compositionally biased toward gly residues. 2 Phorbol-ester/DAG-type zinc fingers span residues 144 to 194 (GHRF…LGKC) and 216 to 266 (PHRF…ANLC). The Protein kinase domain occupies 343–601 (FHFLAVLGKG…AGDIADHIFF (259 aa)). ATP contacts are provided by residues 349–357 (LGKGSFGKV) and Lys-372. Catalysis depends on Asp-467, which acts as the Proton acceptor. The 70-residue stretch at 602–671 (RPIDWGLLEK…TYTNPHITLD (70 aa)) folds into the AGC-kinase C-terminal domain.

The protein belongs to the protein kinase superfamily. AGC Ser/Thr protein kinase family. PKC subfamily.

It carries out the reaction L-seryl-[protein] + ATP = O-phospho-L-seryl-[protein] + ADP + H(+). It catalyses the reaction L-threonyl-[protein] + ATP = O-phospho-L-threonyl-[protein] + ADP + H(+). In Drosophila melanogaster (Fruit fly), this protein is Putative protein kinase C delta type homolog.